A 652-amino-acid polypeptide reads, in one-letter code: ATP-binding cassette sub-family G member 5 (652 aa).

The disordered stretch occupies residues 1–25 (MGELPFLSPEGARGPHINRGSLSSL). Topologically, residues 1–384 (MGELPFLSPE…RVTRNLMRNK (384 aa)) are cytoplasmic. In terms of domain architecture, ABC transporter spans 39–294 (LGVLHVSYSV…FNNCGYPCPE (256 aa)). Residue Cys61 is the site of S-palmitoyl cysteine attachment. 87 to 94 (GSSGSGKT) is a binding site for ATP. A helical transmembrane segment spans residues 385–405 (QAVIMRLVQNLIMGLFLIFYL). The ABC transmembrane type-2 domain maps to 389–646 (MRLVQNLIMG…ILGIVIFKVR (258 aa)). Topologically, residues 406-422 (LRVQNNTLKGAVQDRVG) are extracellular. Asn410 is a glycosylation site (N-linked (GlcNAc...) asparagine). The helical transmembrane segment at 423–443 (LLYQLVGATPYTGMLNAVNLF) threads the bilayer. The Cytoplasmic portion of the chain corresponds to 444-468 (PMLRAVSDQESQDGLYHKWQMLLAY). Residues 469-490 (VLHVLPFSVIATVIFSSVCYWT) traverse the membrane as a helical segment. Residues 491–501 (LGLYPEVARFG) lie on the Extracellular side of the membrane. The helical transmembrane segment at 502–522 (YFSAALLAPHLIGEFLTLVLL) threads the bilayer. At 523 to 529 (GIVQNPN) the chain is on the cytoplasmic side. A helical membrane pass occupies residues 530 to 550 (IVNSIVALLSISGLLIGSGFI). The Extracellular segment spans residues 551 to 624 (RNIQEMPIPL…PGATSRFTAN (74 aa)). N-linked (GlcNAc...) asparagine glycosylation is found at Asn585 and Asn592. A helical membrane pass occupies residues 625–645 (FLILYGFIPALVILGIVIFKV). Over 646 to 652 (RDYLISR) the chain is Cytoplasmic.

The protein belongs to the ABC transporter superfamily. ABCG family. Eye pigment precursor importer (TC 3.A.1.204) subfamily. As to quaternary structure, heterodimer with ABCG8. Mg(2+) serves as cofactor. In terms of processing, N-glycosylated. N-glycosylation is important for efficient export out of the endoplasmic reticulum. Detected in liver and jejunum. Detected on enterocyte villi (at protein level). Expressed in jejunum, ileum and, at lower level, in the liver.

It is found in the cell membrane. It localises to the apical cell membrane. The catalysed reaction is cholesterol(in) + ATP + H2O = cholesterol(out) + ADP + phosphate + H(+). It catalyses the reaction sitosterol(in) + ATP + H2O = sitosterol(out) + ADP + phosphate + H(+). Its activity is regulated as follows. Cholesterol transport is inhibited by vanadate and by beryllium fluoride. ABCG5 and ABCG8 form an obligate heterodimer that mediates Mg(2+)- and ATP-dependent sterol transport across the cell membrane. Plays an essential role in the selective transport of dietary plant sterols and cholesterol in and out of the enterocytes and in the selective sterol excretion by the liver into bile. Required for normal sterol homeostasis. The heterodimer with ABCG8 has ATPase activity. The sequence is that of ATP-binding cassette sub-family G member 5 from Mus musculus (Mouse).